A 467-amino-acid polypeptide reads, in one-letter code: Acid phosphatase PHO11 (467 aa).

A signal peptide spans 1-17 (MLKSAVYSILAASLVNA). H75 functions as the Nucleophile in the catalytic mechanism. Residues N97, N162, N192, N250, and N315 are each glycosylated (N-linked (GlcNAc...) asparagine). The active-site Proton donor is the D338. N-linked (GlcNAc...) asparagine glycans are attached at residues N356, N390, N439, N445, and N461.

The protein belongs to the histidine acid phosphatase family. Glycosylated during secretion across the membrane.

It carries out the reaction a phosphate monoester + H2O = an alcohol + phosphate. The polypeptide is Acid phosphatase PHO11 (PHO11) (Saccharomyces cerevisiae (strain ATCC 204508 / S288c) (Baker's yeast)).